We begin with the raw amino-acid sequence, 266 residues long: Tryptophan synthase alpha chain (266 aa).

Residues Glu49 and Asp60 each act as proton acceptor in the active site.

It belongs to the TrpA family. Tetramer of two alpha and two beta chains.

The catalysed reaction is (1S,2R)-1-C-(indol-3-yl)glycerol 3-phosphate + L-serine = D-glyceraldehyde 3-phosphate + L-tryptophan + H2O. Its pathway is amino-acid biosynthesis; L-tryptophan biosynthesis; L-tryptophan from chorismate: step 5/5. Functionally, the alpha subunit is responsible for the aldol cleavage of indoleglycerol phosphate to indole and glyceraldehyde 3-phosphate. The polypeptide is Tryptophan synthase alpha chain (Opitutus terrae (strain DSM 11246 / JCM 15787 / PB90-1)).